Here is a 304-residue protein sequence, read N- to C-terminus: Acetylxylan esterase A (304 aa).

Positions Met1–Ala19 are cleaved as a signal peptide. Ser147 (charge relay system) is an active-site residue. Asn189 carries N-linked (GlcNAc...) asparagine glycosylation.

Belongs to the carbohydrate esterase 1 (CE1) family. AxeA subfamily. In terms of assembly, monomer.

It is found in the secreted. The enzyme catalyses Deacetylation of xylans and xylo-oligosaccharides.. It participates in glycan degradation; xylan degradation. Acetylxylan esterase involved in the hydrolysis of xylan, a major structural heterogeneous polysaccharide found in plant biomass representing the second most abundant polysaccharide in the biosphere, after cellulose. Degrades acetylated xylans by cleaving acetyl side groups from the hetero-xylan backbone. In Emericella nidulans (strain FGSC A4 / ATCC 38163 / CBS 112.46 / NRRL 194 / M139) (Aspergillus nidulans), this protein is Acetylxylan esterase A (axeA).